The following is a 183-amino-acid chain: Threonylcarbamoyl-AMP synthase (183 aa).

The 183-residue stretch at Met1 to Gly183 folds into the YrdC-like domain.

The protein belongs to the SUA5 family. TsaC subfamily.

Its subcellular location is the cytoplasm. The catalysed reaction is L-threonine + hydrogencarbonate + ATP = L-threonylcarbamoyladenylate + diphosphate + H2O. In terms of biological role, required for the formation of a threonylcarbamoyl group on adenosine at position 37 (t(6)A37) in tRNAs that read codons beginning with adenine. Catalyzes the conversion of L-threonine, HCO(3)(-)/CO(2) and ATP to give threonylcarbamoyl-AMP (TC-AMP) as the acyladenylate intermediate, with the release of diphosphate. The chain is Threonylcarbamoyl-AMP synthase from Haemophilus influenzae (strain 86-028NP).